A 108-amino-acid chain; its full sequence is Phosphoribosyl-ATP pyrophosphatase (108 aa).

It belongs to the PRA-PH family.

Its subcellular location is the cytoplasm. It catalyses the reaction 1-(5-phospho-beta-D-ribosyl)-ATP + H2O = 1-(5-phospho-beta-D-ribosyl)-5'-AMP + diphosphate + H(+). The protein operates within amino-acid biosynthesis; L-histidine biosynthesis; L-histidine from 5-phospho-alpha-D-ribose 1-diphosphate: step 2/9. The polypeptide is Phosphoribosyl-ATP pyrophosphatase (Aromatoleum aromaticum (strain DSM 19018 / LMG 30748 / EbN1) (Azoarcus sp. (strain EbN1))).